Consider the following 308-residue polypeptide: MAKEIVGGFKFDQRHGKERVQVARVWKTKQGWYFIVEWRVGNSLLSDCVNSYVRDDNSDIVATDTMKNTVYAKAKECSEILSVEDFAILLAKHFISFYKQVTAAIVNIVEKPWERVSVDGQPHEHGFKLGSERHTAEAIVQKSGALQLTSGIEGLSLLKTTKSGFEGFIRDKYTALPETHERMLATEVTALWRYSYESLYSIPQKPLYFTDKYLEVKKVLADNFFGPPNVGVYSPSVQNTLYLMAKAALNRFPEIASIQLKMPNIHFLPVNISNKDGPIVKFEADVYLPTDEPHGSIQASLRRLWSKL.

Catalysis depends on charge relay system residues Lys17 and Thr63. Thr63, Asp64, Phe165, Arg182, Val237, Gln238, and Asn264 together coordinate urate. His266 serves as the catalytic Charge relay system. A Microbody targeting signal motif is present at residues 306–308 (SKL).

Belongs to the uricase family.

The protein resides in the peroxisome. The enzyme catalyses urate + O2 + H2O = 5-hydroxyisourate + H2O2. It functions in the pathway purine metabolism; urate degradation; (S)-allantoin from urate: step 1/3. In terms of biological role, catalyzes the oxidation of uric acid to 5-hydroxyisourate, which is further processed to form (S)-allantoin. This is Uricase-2 isozyme 1 from Canavalia lineata (Beach bean).